The primary structure comprises 217 residues: MGRKIHPLGFRLGVSQKHYSYWFAQKKDYPKFLEEDRKIRNLVEKYIQKHVKSVSNYGGVGHIEIQRKTDLIQINIYTGFPDLLIEEQSLGISQMKQDLRNLLGLESQNLRVTLTGVIQPYGEPKILAEHVASQLKNRVPFRRTMKKTIEMAGRTNGGGIKIQIAGRLNGSEMARVEWAREGRVPLQTVEANISYCYHPAQTIYGVLGIKIWVFRDT.

In terms of domain architecture, KH type-2 spans 47–118; it reads IQKHVKSVSN…NLRVTLTGVI (72 aa).

It belongs to the universal ribosomal protein uS3 family. Part of the 30S ribosomal subunit.

It localises to the plastid. The protein resides in the chloroplast. The sequence is that of Small ribosomal subunit protein uS3c (rps3) from Adiantum capillus-veneris (Maidenhair fern).